Here is a 262-residue protein sequence, read N- to C-terminus: Acyl-[acyl-carrier-protein]--UDP-N-acetylglucosamine O-acyltransferase (262 aa).

The protein belongs to the transferase hexapeptide repeat family. LpxA subfamily. Homotrimer.

The protein resides in the cytoplasm. The catalysed reaction is a (3R)-hydroxyacyl-[ACP] + UDP-N-acetyl-alpha-D-glucosamine = a UDP-3-O-[(3R)-3-hydroxyacyl]-N-acetyl-alpha-D-glucosamine + holo-[ACP]. The protein operates within glycolipid biosynthesis; lipid IV(A) biosynthesis; lipid IV(A) from (3R)-3-hydroxytetradecanoyl-[acyl-carrier-protein] and UDP-N-acetyl-alpha-D-glucosamine: step 1/6. Involved in the biosynthesis of lipid A, a phosphorylated glycolipid that anchors the lipopolysaccharide to the outer membrane of the cell. This Salmonella typhi protein is Acyl-[acyl-carrier-protein]--UDP-N-acetylglucosamine O-acyltransferase.